Consider the following 231-residue polypeptide: Orotidine 5'-phosphate decarboxylase (231 aa).

Residues D11, K34, 61-70 (DLKLHDIPNT), T117, R179, Q188, G208, and R209 contribute to the substrate site. K63 serves as the catalytic Proton donor.

Belongs to the OMP decarboxylase family. Type 1 subfamily. As to quaternary structure, homodimer.

It carries out the reaction orotidine 5'-phosphate + H(+) = UMP + CO2. Its pathway is pyrimidine metabolism; UMP biosynthesis via de novo pathway; UMP from orotate: step 2/2. Its function is as follows. Catalyzes the decarboxylation of orotidine 5'-monophosphate (OMP) to uridine 5'-monophosphate (UMP). The sequence is that of Orotidine 5'-phosphate decarboxylase from Streptococcus thermophilus (strain CNRZ 1066).